A 278-amino-acid polypeptide reads, in one-letter code: HTH-type transcriptional activator RhaS (278 aa).

Residues 174 to 272 (NQLLAWLEDH…DWSPRDIRQG (99 aa)) enclose the HTH araC/xylS-type domain. DNA-binding regions (H-T-H motif) lie at residues 191–212 (ESIA…KQQT) and 239–262 (VTDI…RREF).

In terms of assembly, binds DNA as a dimer.

It is found in the cytoplasm. Its function is as follows. Activates expression of the rhaBAD and rhaT operons. This Citrobacter koseri (strain ATCC BAA-895 / CDC 4225-83 / SGSC4696) protein is HTH-type transcriptional activator RhaS.